A 276-amino-acid chain; its full sequence is Small ribosomal subunit protein uS2 (276 aa).

The protein belongs to the universal ribosomal protein uS2 family.

The sequence is that of Small ribosomal subunit protein uS2 from Chlamydia caviae (strain ATCC VR-813 / DSM 19441 / 03DC25 / GPIC) (Chlamydophila caviae).